A 94-amino-acid polypeptide reads, in one-letter code: Putative regulatory protein LEPBI_I0950 (94 aa).

Belongs to the RemA family.

This is Putative regulatory protein LEPBI_I0950 from Leptospira biflexa serovar Patoc (strain Patoc 1 / ATCC 23582 / Paris).